The primary structure comprises 378 residues: Erythronate-4-phosphate dehydrogenase (378 aa).

Ser-45 and Thr-66 together coordinate substrate. NAD(+) contacts are provided by Asp-146 and Thr-175. Arg-208 is an active-site residue. Asp-232 is an NAD(+) binding site. Residue Glu-237 is part of the active site. The Proton donor role is filled by His-254. Residue Gly-257 coordinates NAD(+). Tyr-258 contacts substrate.

This sequence belongs to the D-isomer specific 2-hydroxyacid dehydrogenase family. PdxB subfamily. As to quaternary structure, homodimer.

It localises to the cytoplasm. It catalyses the reaction 4-phospho-D-erythronate + NAD(+) = (R)-3-hydroxy-2-oxo-4-phosphooxybutanoate + NADH + H(+). It participates in cofactor biosynthesis; pyridoxine 5'-phosphate biosynthesis; pyridoxine 5'-phosphate from D-erythrose 4-phosphate: step 2/5. Functionally, catalyzes the oxidation of erythronate-4-phosphate to 3-hydroxy-2-oxo-4-phosphonooxybutanoate. This Escherichia fergusonii (strain ATCC 35469 / DSM 13698 / CCUG 18766 / IAM 14443 / JCM 21226 / LMG 7866 / NBRC 102419 / NCTC 12128 / CDC 0568-73) protein is Erythronate-4-phosphate dehydrogenase.